Consider the following 201-residue polypeptide: 3-isopropylmalate dehydratase small subunit (201 aa).

This sequence belongs to the LeuD family. LeuD type 1 subfamily. Heterodimer of LeuC and LeuD.

It catalyses the reaction (2R,3S)-3-isopropylmalate = (2S)-2-isopropylmalate. It participates in amino-acid biosynthesis; L-leucine biosynthesis; L-leucine from 3-methyl-2-oxobutanoate: step 2/4. Catalyzes the isomerization between 2-isopropylmalate and 3-isopropylmalate, via the formation of 2-isopropylmaleate. The sequence is that of 3-isopropylmalate dehydratase small subunit from Sinorhizobium fredii (strain NBRC 101917 / NGR234).